The primary structure comprises 186 residues: ATP synthase subunit delta (186 aa).

Belongs to the ATPase delta chain family. In terms of assembly, F-type ATPases have 2 components, F(1) - the catalytic core - and F(0) - the membrane proton channel. F(1) has five subunits: alpha(3), beta(3), gamma(1), delta(1), epsilon(1). CF(0) has four main subunits: a(1), b(1), b'(1) and c(10-14). The alpha and beta chains form an alternating ring which encloses part of the gamma chain. F(1) is attached to F(0) by a central stalk formed by the gamma and epsilon chains, while a peripheral stalk is formed by the delta, b and b' chains.

It is found in the cell inner membrane. In terms of biological role, f(1)F(0) ATP synthase produces ATP from ADP in the presence of a proton or sodium gradient. F-type ATPases consist of two structural domains, F(1) containing the extramembraneous catalytic core and F(0) containing the membrane proton channel, linked together by a central stalk and a peripheral stalk. During catalysis, ATP synthesis in the catalytic domain of F(1) is coupled via a rotary mechanism of the central stalk subunits to proton translocation. This protein is part of the stalk that links CF(0) to CF(1). It either transmits conformational changes from CF(0) to CF(1) or is implicated in proton conduction. The protein is ATP synthase subunit delta of Bradyrhizobium sp. (strain ORS 278).